We begin with the raw amino-acid sequence, 298 residues long: Ribosomal protein L11 methyltransferase (298 aa).

4 residues coordinate S-adenosyl-L-methionine: Thr152, Gly176, Asp198, and Asn236.

Belongs to the methyltransferase superfamily. PrmA family.

Its subcellular location is the cytoplasm. It catalyses the reaction L-lysyl-[protein] + 3 S-adenosyl-L-methionine = N(6),N(6),N(6)-trimethyl-L-lysyl-[protein] + 3 S-adenosyl-L-homocysteine + 3 H(+). Functionally, methylates ribosomal protein L11. The chain is Ribosomal protein L11 methyltransferase from Polaromonas sp. (strain JS666 / ATCC BAA-500).